The sequence spans 416 residues: Putative UV-damage repair protein UvrX (416 aa).

The UmuC domain occupies 12–196 (ILCVDMKSFY…RPLSKMWGIG (185 aa)). Mg(2+) contacts are provided by Asp16 and Asp115. The active site involves Glu116.

This sequence belongs to the DNA polymerase type-Y family. The cofactor is Mg(2+).

The sequence is that of Putative UV-damage repair protein UvrX (uvrX) from Bacillus subtilis (strain 168).